The chain runs to 389 residues: Chalcone synthase H2 (389 aa).

Residue Cys-164 is part of the active site.

Belongs to the thiolase-like superfamily. Chalcone/stilbene synthases family.

The protein localises to the cytoplasm. It catalyses the reaction (E)-4-coumaroyl-CoA + 3 malonyl-CoA + 3 H(+) = 2',4,4',6'-tetrahydroxychalcone + 3 CO2 + 4 CoA. It participates in secondary metabolite biosynthesis; flavonoid biosynthesis. Involved in the biosynthesis of prenylated phenolics natural products which contribute to the bitter taste of beer and display broad biological activities. Chalcone synthase that can use 4-coumaroyl-CoA to produce 4,2',4',6'-tetrahydroxychalcone (also termed naringenin-chalcone or chalcone) which can, under specific conditions, spontaneously isomerize into naringenin. In Humulus lupulus (European hop), this protein is Chalcone synthase H2.